Consider the following 300-residue polypeptide: 4-hydroxy-tetrahydrodipicolinate synthase (300 aa).

Thr56 serves as a coordination point for pyruvate. The Proton donor/acceptor role is filled by Tyr145. Lys173 functions as the Schiff-base intermediate with substrate in the catalytic mechanism. Residue Val215 participates in pyruvate binding.

The protein belongs to the DapA family. As to quaternary structure, homotetramer; dimer of dimers.

Its subcellular location is the cytoplasm. The enzyme catalyses L-aspartate 4-semialdehyde + pyruvate = (2S,4S)-4-hydroxy-2,3,4,5-tetrahydrodipicolinate + H2O + H(+). The protein operates within amino-acid biosynthesis; L-lysine biosynthesis via DAP pathway; (S)-tetrahydrodipicolinate from L-aspartate: step 3/4. Catalyzes the condensation of (S)-aspartate-beta-semialdehyde [(S)-ASA] and pyruvate to 4-hydroxy-tetrahydrodipicolinate (HTPA). The chain is 4-hydroxy-tetrahydrodipicolinate synthase from Prochlorococcus marinus (strain MIT 9301).